A 310-amino-acid chain; its full sequence is Ribosomal RNA small subunit methyltransferase H (310 aa).

Residues 33–35 (AGH), Asp53, Phe79, Asp100, and Gln107 each bind S-adenosyl-L-methionine.

This sequence belongs to the methyltransferase superfamily. RsmH family.

It is found in the cytoplasm. The enzyme catalyses cytidine(1402) in 16S rRNA + S-adenosyl-L-methionine = N(4)-methylcytidine(1402) in 16S rRNA + S-adenosyl-L-homocysteine + H(+). Specifically methylates the N4 position of cytidine in position 1402 (C1402) of 16S rRNA. This is Ribosomal RNA small subunit methyltransferase H from Clostridium tetani (strain Massachusetts / E88).